A 202-amino-acid polypeptide reads, in one-letter code: Na(+)-translocating NADH-quinone reductase subunit E (202 aa).

6 helical membrane-spanning segments follow: residues 11–31 (SVFI…FIAI), 35–55 (VETA…TVPA), 81–101 (FLGF…LEML), 114–134 (GIYL…LFMV), 144–164 (VVYG…LAGI), and 180–200 (LGIA…FSGI).

This sequence belongs to the NqrDE/RnfAE family. Composed of six subunits; NqrA, NqrB, NqrC, NqrD, NqrE and NqrF.

The protein localises to the cell inner membrane. It carries out the reaction a ubiquinone + n Na(+)(in) + NADH + H(+) = a ubiquinol + n Na(+)(out) + NAD(+). Its function is as follows. NQR complex catalyzes the reduction of ubiquinone-1 to ubiquinol by two successive reactions, coupled with the transport of Na(+) ions from the cytoplasm to the periplasm. NqrA to NqrE are probably involved in the second step, the conversion of ubisemiquinone to ubiquinol. The protein is Na(+)-translocating NADH-quinone reductase subunit E of Azotobacter vinelandii (strain DJ / ATCC BAA-1303).